A 102-amino-acid chain; its full sequence is Acid shock protein (102 aa).

The first 21 residues, 1–21, serve as a signal peptide directing secretion; it reads MKKVLALVVAAAMGLSSAAFA. Over residues 22–41 the composition is skewed to low complexity; the sequence is AETATTPAPTATTTKAAPAK. The propeptide occupies 22-58; that stretch reads AETATTPAPTATTTKAAPAKTTHHKKQHKAAPAQKAQ. The segment at 22–102 is disordered; it reads AETATTPAPT…PAKPAAQPAA (81 aa). Over residues 80 to 90 the composition is skewed to basic residues; sequence AAKKHARKHSH. The segment covering 91–102 has biased composition (low complexity); the sequence is QQPAKPAAQPAA.

It belongs to the Asr family. In terms of processing, proteolytic processing gives rise to the active protein.

Its subcellular location is the periplasm. Required for growth and/or survival at acidic conditions. This is Acid shock protein from Escherichia coli O127:H6 (strain E2348/69 / EPEC).